The following is a 318-amino-acid chain: HPr kinase/phosphorylase (318 aa).

Residues histidine 146 and lysine 167 contribute to the active site. Residue 161-168 (GESGLGKS) participates in ATP binding. Residue serine 168 coordinates Mg(2+). Residue aspartate 185 is the Proton acceptor; for phosphorylation activity. Proton donor; for dephosphorylation activity of the active site. An important for the catalytic mechanism of both phosphorylation and dephosphorylation region spans residues 209-218 (LEVRGIGLLD). Mg(2+) is bound at residue glutamate 210. Arginine 252 is an active-site residue. Residues 273-278 (QVVAGR) form an important for the catalytic mechanism of dephosphorylation region.

Belongs to the HPrK/P family. As to quaternary structure, homohexamer. Mg(2+) is required as a cofactor.

The enzyme catalyses [HPr protein]-L-serine + ATP = [HPr protein]-O-phospho-L-serine + ADP + H(+). It catalyses the reaction [HPr protein]-O-phospho-L-serine + phosphate + H(+) = [HPr protein]-L-serine + diphosphate. In terms of biological role, catalyzes the ATP- as well as the pyrophosphate-dependent phosphorylation of a specific serine residue in HPr, a phosphocarrier protein of the phosphoenolpyruvate-dependent sugar phosphotransferase system (PTS). HprK/P also catalyzes the pyrophosphate-producing, inorganic phosphate-dependent dephosphorylation (phosphorolysis) of seryl-phosphorylated HPr (P-Ser-HPr). This Verminephrobacter eiseniae (strain EF01-2) protein is HPr kinase/phosphorylase.